The sequence spans 342 residues: Holliday junction branch migration complex subunit RuvB (342 aa).

The interval 1-181 is large ATPase domain (RuvB-L); that stretch reads MENRMVTPFD…FGMLCAMEFY (181 aa). ATP contacts are provided by residues L20, R21, G62, K65, T66, T67, 128 to 130, R171, Y181, and R218; that span reads EDY. Residue T66 participates in Mg(2+) binding. Residues 182-252 form a small ATPAse domain (RuvB-S) region; sequence TDEELMEIVV…GAKAALDLLE (71 aa). Residues 255-342 form a head domain (RuvB-H) region; it reads KEGLDKIDNK…KDNQVSIFNK (88 aa). DNA-binding residues include R310 and R315.

The protein belongs to the RuvB family. As to quaternary structure, homohexamer. Forms an RuvA(8)-RuvB(12)-Holliday junction (HJ) complex. HJ DNA is sandwiched between 2 RuvA tetramers; dsDNA enters through RuvA and exits via RuvB. An RuvB hexamer assembles on each DNA strand where it exits the tetramer. Each RuvB hexamer is contacted by two RuvA subunits (via domain III) on 2 adjacent RuvB subunits; this complex drives branch migration. In the full resolvosome a probable DNA-RuvA(4)-RuvB(12)-RuvC(2) complex forms which resolves the HJ.

The protein resides in the cytoplasm. The enzyme catalyses ATP + H2O = ADP + phosphate + H(+). Functionally, the RuvA-RuvB-RuvC complex processes Holliday junction (HJ) DNA during genetic recombination and DNA repair, while the RuvA-RuvB complex plays an important role in the rescue of blocked DNA replication forks via replication fork reversal (RFR). RuvA specifically binds to HJ cruciform DNA, conferring on it an open structure. The RuvB hexamer acts as an ATP-dependent pump, pulling dsDNA into and through the RuvAB complex. RuvB forms 2 homohexamers on either side of HJ DNA bound by 1 or 2 RuvA tetramers; 4 subunits per hexamer contact DNA at a time. Coordinated motions by a converter formed by DNA-disengaged RuvB subunits stimulates ATP hydrolysis and nucleotide exchange. Immobilization of the converter enables RuvB to convert the ATP-contained energy into a lever motion, pulling 2 nucleotides of DNA out of the RuvA tetramer per ATP hydrolyzed, thus driving DNA branch migration. The RuvB motors rotate together with the DNA substrate, which together with the progressing nucleotide cycle form the mechanistic basis for DNA recombination by continuous HJ branch migration. Branch migration allows RuvC to scan DNA until it finds its consensus sequence, where it cleaves and resolves cruciform DNA. The protein is Holliday junction branch migration complex subunit RuvB of Clostridium botulinum (strain ATCC 19397 / Type A).